A 118-amino-acid chain; its full sequence is UPF0125 protein RSc1426 (118 aa).

It belongs to the UPF0125 (RnfH) family.

This is UPF0125 protein RSc1426 from Ralstonia nicotianae (strain ATCC BAA-1114 / GMI1000) (Ralstonia solanacearum).